The sequence spans 146 residues: Protein archease (146 aa).

Residues Asp-16, Asp-145, and Ile-146 each coordinate Ca(2+).

Belongs to the archease family.

In terms of biological role, activates the tRNA-splicing ligase complex by facilitating the enzymatic turnover of catalytic subunit RtcB. Acts by promoting the guanylylation of RtcB, a key intermediate step in tRNA ligation. Can also alter the NTP specificity of RtcB such that ATP, dGTP or ITP is used efficiently. The protein is Protein archease of Methanosarcina acetivorans (strain ATCC 35395 / DSM 2834 / JCM 12185 / C2A).